Reading from the N-terminus, the 178-residue chain is Ribosome maturation factor RimM (178 aa).

One can recognise a PRC barrel domain in the interval 101 to 178; the sequence is TDEYYWYQLV…VMRVEWDADF (78 aa).

This sequence belongs to the RimM family. As to quaternary structure, binds ribosomal protein uS19.

It localises to the cytoplasm. Its function is as follows. An accessory protein needed during the final step in the assembly of 30S ribosomal subunit, possibly for assembly of the head region. Essential for efficient processing of 16S rRNA. May be needed both before and after RbfA during the maturation of 16S rRNA. It has affinity for free ribosomal 30S subunits but not for 70S ribosomes. In Pseudomonas entomophila (strain L48), this protein is Ribosome maturation factor RimM.